We begin with the raw amino-acid sequence, 694 residues long: NADPH--cytochrome P450 reductase (694 aa).

The Lumenal segment spans residues 1–8 (MAQLDTLD). A helical membrane pass occupies residues 9–31 (LVVLAVLLVGSVAYFTKGTYWAV). The Cytoplasmic segment spans residues 32–694 (AKDPYASTGP…RGRYQEDVWS (663 aa)). Residues 66–220 (CVIFYGSQTG…DFLAWKEPMW (155 aa)) enclose the Flavodoxin-like domain. Residues 72 to 77 (SQTGTA), 123 to 126 (ATYG), 168 to 177 (LGNNTYEHYN), and Asp203 each bind FMN. The 262-residue stretch at 276–537 (HNPFIAPIAE…HVRHSNFKLP (262 aa)) folds into the FAD-binding FR-type domain. Arg295 is an NADP(+) binding site. Residues 450–453 (RYYS), 468–470 (TAV), and 485–488 (GVTT) each bind FAD. Residues Thr551, 613 to 614 (SR), 619 to 623 (KVYVQ), and Glu655 each bind NADP(+). Trp693 serves as a coordination point for FAD.

It belongs to the NADPH--cytochrome P450 reductase family. This sequence in the N-terminal section; belongs to the flavodoxin family. In the C-terminal section; belongs to the flavoprotein pyridine nucleotide cytochrome reductase family. FAD is required as a cofactor. Requires FMN as cofactor.

It localises to the endoplasmic reticulum membrane. The protein resides in the mitochondrion outer membrane. The protein localises to the cell membrane. It catalyses the reaction 2 oxidized [cytochrome P450] + NADPH = 2 reduced [cytochrome P450] + NADP(+) + H(+). In terms of biological role, this enzyme is required for electron transfer from NADP to cytochrome P450 in microsomes. It can also provide electron transfer to heme oxygenase and cytochrome B5. Involved in ergosterol biosynthesis. The polypeptide is NADPH--cytochrome P450 reductase (Aspergillus niger).